Consider the following 361-residue polypeptide: Peptide chain release factor 1 (361 aa).

Q237 is subject to N5-methylglutamine. The span at 287-297 (KQQKEQSDTRK) shows a compositional bias: basic and acidic residues. A disordered region spans residues 287–313 (KQQKEQSDTRKSLVGSGDRSERIRTYN).

Belongs to the prokaryotic/mitochondrial release factor family. Methylated by PrmC. Methylation increases the termination efficiency of RF1.

It localises to the cytoplasm. Peptide chain release factor 1 directs the termination of translation in response to the peptide chain termination codons UAG and UAA. This is Peptide chain release factor 1 from Francisella tularensis subsp. holarctica (strain FTNF002-00 / FTA).